We begin with the raw amino-acid sequence, 144 residues long: Augurin-B (144 aa).

Residues 1–18 (MSLHSLCVPTILLISVLS) form the signal peptide. The propeptide occupies 19-68 (ICLSSGGSSDSKLHRILIKRDAKEIESRPKAYISVQQSKAKEFLSGLHRT). Residues 109–144 (RSNDQGRQHHHDENAPMSQQDPRYNRHGANVNYDYY) form a disordered region. Over residues 112–122 (DQGRQHHHDEN) the composition is skewed to basic and acidic residues.

Belongs to the augurin family.

The protein resides in the secreted. The protein localises to the cytoplasm. It localises to the apical cell membrane. In terms of biological role, probable hormone. Required for the proper formation of the central nervous system by attenuating cell proliferation during development. This chain is Augurin-B, found in Danio rerio (Zebrafish).